Consider the following 390-residue polypeptide: MENFTYYNPTKLIFGKGQLEQLRKEFKRYGKNVLLVYGGGSIKRNGLYDQVTGILKEEGAVVHELSGVEPNPRLATVEKGIGLCREHDIDFLLAVGGGSVIDCTKAIAAGVKYDGDAWDIFSKKVTAEDALPFGTVLTLAATGSEMNPDSVITNWETNEKFVWGSNVTHPRFSILDPENTFTVPENQTVYGMVDMMSHVFEQYFHNVENTPLQDRMCFAVLQTVIETAPKLLEDLENYELRETILYAGTIALNGTLQMGYFGDWASHTMEHAVSAVYDIPHAGGLAILFPNWMRYTLDTNVGRFKNLMLNMFDIDTEGKTDKEIALEGIDKLSAFWTSLGAPSRLADYNIGEEKLELIADIAAKEMEHGGFGNFQKLNKDDVLAILRASL.

This sequence belongs to the iron-containing alcohol dehydrogenase family.

Its pathway is alcohol metabolism; butanol biosynthesis. In Bacillus subtilis (strain 168), this protein is Probable NADH-dependent butanol dehydrogenase 2 (yugK).